The primary structure comprises 127 residues: Cold-regulated protein 1 (127 aa).

The segment at 39–127 is disordered; that stretch reads ARGPPPSPAP…WTRPRMARAR (89 aa). Basic residues predominate over residues 85-101; it reads SRRRRRRRATRRARSRM. A compositionally biased stretch (low complexity) spans 102–121; sequence PRTTPWRAPRAPARAWWTRP.

This chain is Cold-regulated protein 1, found in Hordeum vulgare (Barley).